Reading from the N-terminus, the 828-residue chain is Class I hydrophobin hum3 (828 aa).

The signal sequence occupies residues 1–22 (MKYLQFLAAVAAVSAFSGPVLA). Residues Asn156, Asn222, and Asn738 are each glycosylated (N-linked (GlcNAc...) asparagine). Disulfide bonds link Cys750/Cys808, Cys757/Cys802, Cys758/Cys788, and Cys809/Cys822. The N-linked (GlcNAc...) asparagine glycan is linked to Asn811.

This sequence in the C-terminal section; belongs to the fungal hydrophobin family. In terms of assembly, self-assembles to form functional amyloid fibrils called rodlets. Self-assembly into fibrillar rodlets occurs spontaneously at hydrophobic:hydrophilic interfaces and the rodlets further associate laterally to form amphipathic monolayers. Hum3 is an atypical hydrophobin that consists in a repetitive repellent-like region that spans 578 aa which is separated from a hydrophobin-like domain by a spacer region containing three possible kex2 processing sites. The repetitive region contains 17 amphipathic repeats of 31-36 aa each of them with a C-terminal putative kex2 processing motif.

Its subcellular location is the secreted. The protein resides in the cell wall. Aerial growth, conidiation, and dispersal of filamentous fungi in the environment rely upon a capability of their secreting small amphipathic proteins called hydrophobins (HPBs) with low sequence identity. Class I can self-assemble into an outermost layer of rodlet bundles on aerial cell surfaces, conferring cellular hydrophobicity that supports fungal growth, development and dispersal; whereas Class II form highly ordered films at water-air interfaces through intermolecular interactions but contribute nothing to the rodlet structure. Atypical class I hydrophobin that is preceded by a signal sequence and 17 imperfect repeats. The repeated peptides might function as repellents whereas the class I hydrophobin seems not to be crucial for the formation of aerial hyphae. Hydrophobins of Mycosarcoma maydis have been functionally replaced, at least partially, by repellents. Hum3 and rsp1 together are pathogenicity proteins that share an essential function in early stages of the infection. This Mycosarcoma maydis (Corn smut fungus) protein is Class I hydrophobin hum3.